The chain runs to 357 residues: Isopentenyl-diphosphate delta-isomerase (357 aa).

Arginine 12–lysine 13 serves as a coordination point for substrate. FMN-binding positions include serine 70, serine 71–threonine 73, serine 101, and asparagine 130. Residue serine 101–arginine 103 participates in substrate binding. Glutamine 165 contributes to the substrate binding site. Glutamate 166 lines the Mg(2+) pocket. Residues lysine 197, glycine 289 to arginine 291, and alanine 310 to glutamine 311 contribute to the FMN site.

Belongs to the IPP isomerase type 2 family. In terms of assembly, homooctamer. Dimer of tetramers. Requires FMN as cofactor. It depends on NADPH as a cofactor. Mg(2+) serves as cofactor.

The protein resides in the cytoplasm. The enzyme catalyses isopentenyl diphosphate = dimethylallyl diphosphate. Functionally, involved in the biosynthesis of isoprenoids. Catalyzes the 1,3-allylic rearrangement of the homoallylic substrate isopentenyl (IPP) to its allylic isomer, dimethylallyl diphosphate (DMAPP). The chain is Isopentenyl-diphosphate delta-isomerase from Chlorobaculum parvum (strain DSM 263 / NCIMB 8327) (Chlorobium vibrioforme subsp. thiosulfatophilum).